The primary structure comprises 390 residues: Zinc transporter 8 (390 aa).

The N-terminal stretch at 1 to 25 (MRTNTTATVLLAAAVALLLATAARG) is a signal peptide. Asn-4 carries an N-linked (GlcNAc...) asparagine glycan. At 26-50 (DGGDGGCGKEDAAAGRDRARARGLK) the chain is on the extracellular side. A helical membrane pass occupies residues 51-71 (IAAFFSILVCGALGCGLPSLG). Topologically, residues 72–82 (RHVPALRPDGD) are cytoplasmic. Residues 83–103 (VFFLVKAFAAGVILATGFIHI) traverse the membrane as a helical segment. The Extracellular portion of the chain corresponds to 104 to 124 (LPDAFDNLTDDCLPAGGPWKE). Asn-110 carries an N-linked (GlcNAc...) asparagine glycan. The chain crosses the membrane as a helical span at residues 125 to 145 (FPFAGFGAMVGAIGTLVVDTL). Residues 146–235 (ATGYFTRALS…DDKETTLRHR (90 aa)) lie on the Cytoplasmic side of the membrane. The segment at 165-199 (VADEEKQSAAATQQHNHHHNHHVVGDGGGGGEEHE) is disordered. A helical transmembrane segment spans residues 236 to 256 (VISQVLELGIVVHSVIIGISL). The Extracellular portion of the chain corresponds to 257–267 (GASQNPETIKP). A helical membrane pass occupies residues 268 to 288 (LVVALSFHQMFEGMGLGGCIV). Residues 289-296 (QAKFKVRS) lie on the Cytoplasmic side of the membrane. A helical membrane pass occupies residues 297–317 (IVTMVLFFCLTTPVGIAVGVG). At 318 to 329 (ISSVYNESSPTA) the chain is on the extracellular side. An N-linked (GlcNAc...) asparagine glycan is attached at Asn-323. Residues 330–350 (LVVEGILNSVAAGILIYMALV) traverse the membrane as a helical segment. Residues 351–369 (DLLAEDFMNPRVQSKGKLQ) lie on the Cytoplasmic side of the membrane. A helical membrane pass occupies residues 370-390 (LGINLAMLAGAGLMSMLAKWA).

This sequence belongs to the ZIP transporter (TC 2.A.5) family.

It localises to the cell membrane. In terms of biological role, zinc transporter that may mediate zinc uptake from the rhizosphere and may be responsible for the translocation of zinc within the plant. This is Zinc transporter 8 (ZIP8) from Oryza sativa subsp. japonica (Rice).